The following is a 162-amino-acid chain: Ribonuclease P protein component (162 aa).

The tract at residues 1–67 (MDEKDLAAQP…GGKLVSLKGD (67 aa)) is disordered. The span at 21-31 (GPHEDPRRQEG) shows a compositional bias: basic and acidic residues.

Belongs to the RnpA family. As to quaternary structure, consists of a catalytic RNA component (M1 or rnpB) and a protein subunit.

The enzyme catalyses Endonucleolytic cleavage of RNA, removing 5'-extranucleotides from tRNA precursor.. In terms of biological role, RNaseP catalyzes the removal of the 5'-leader sequence from pre-tRNA to produce the mature 5'-terminus. It can also cleave other RNA substrates such as 4.5S RNA. The protein component plays an auxiliary but essential role in vivo by binding to the 5'-leader sequence and broadening the substrate specificity of the ribozyme. This Thermus brockianus protein is Ribonuclease P protein component.